A 463-amino-acid chain; its full sequence is Chaperone SurA (463 aa).

The first 25 residues, 1-25 (MTKPFSVVLASLLAITSTISPLASA), serve as a signal peptide directing secretion. PpiC domains are found at residues 174–276 (GSKY…KLME) and 289–388 (VTEY…QRVG). Disordered stretches follow at residues 329–348 (ATAK…GDLG) and 434–463 (GDRA…KPTR). Residues 439–452 (NNATAAPAKSADPA) show a composition bias toward low complexity. Residues 453–463 (LPAPPPAKPTR) show a composition bias toward pro residues.

It is found in the periplasm. The enzyme catalyses [protein]-peptidylproline (omega=180) = [protein]-peptidylproline (omega=0). In terms of biological role, chaperone involved in the correct folding and assembly of outer membrane proteins. Recognizes specific patterns of aromatic residues and the orientation of their side chains, which are found more frequently in integral outer membrane proteins. May act in both early periplasmic and late outer membrane-associated steps of protein maturation. In Xanthomonas oryzae pv. oryzae (strain MAFF 311018), this protein is Chaperone SurA.